The primary structure comprises 155 residues: Cytochrome c-type biogenesis protein CcmE (155 aa).

Residues 1 to 8 (MNPLRKKR) are Cytoplasmic-facing. Residues 9–29 (LLIIAALLAGVGLAMTLALGA) traverse the membrane as a helical; Signal-anchor for type II membrane protein segment. Topologically, residues 30-155 (LKENINLFYT…GGSSTPAKQG (126 aa)) are periplasmic. Residues histidine 124 and tyrosine 128 each coordinate heme. Positions 134–155 (TKALRDSGQAAPGGSSTPAKQG) are disordered.

The protein belongs to the CcmE/CycJ family.

The protein resides in the cell inner membrane. Heme chaperone required for the biogenesis of c-type cytochromes. Transiently binds heme delivered by CcmC and transfers the heme to apo-cytochromes in a process facilitated by CcmF and CcmH. The chain is Cytochrome c-type biogenesis protein CcmE from Pseudomonas savastanoi pv. phaseolicola (strain 1448A / Race 6) (Pseudomonas syringae pv. phaseolicola (strain 1448A / Race 6)).